The primary structure comprises 285 residues: GTP-binding protein 8 (285 aa).

One can recognise an EngB-type G domain in the interval 110-283; that stretch reads RQPEVCFIGR…KCFIADITGS (174 aa). GTP is bound by residues 118-125, 147-151, 165-168, 227-230, and 262-264; these read GRSNVGKS, GHTKK, DMPG, TKID, and ISA. Mg(2+)-binding residues include Ser125 and Thr149.

This sequence belongs to the TRAFAC class TrmE-Era-EngA-EngB-Septin-like GTPase superfamily. EngB GTPase family. Requires Mg(2+) as cofactor.

In Rattus norvegicus (Rat), this protein is GTP-binding protein 8 (Gtpbp8).